Consider the following 267-residue polypeptide: Actin maturation protease (267 aa).

The segment at 1–32 is disordered; the sequence is MSNISSVAPPPPPPPMIVTPSTPATTKERPVG. Pro residues predominate over residues 8-17; it reads APPPPPPPMI. The segment at 74–188 is peptidase C39-like; the sequence is SIVQVGPTCG…WALIVGYLVD (115 aa). C82 is a catalytic residue.

This sequence belongs to the ACTMAP family.

The enzyme catalyses N-terminal N(alpha)-acetyl-L-cysteinyl-L-aspartyl-[protein] + H2O = N-terminal L-aspartyl-[protein] + N-acetyl-L-cysteine. In terms of biological role, actin maturation protease that specifically mediates the cleavage of immature acetylated N-terminal actin, thereby contributing to actin maturation. The chain is Actin maturation protease from Drosophila melanogaster (Fruit fly).